A 929-amino-acid chain; its full sequence is Isoleucine--tRNA ligase (929 aa).

The 'HIGH' region motif lies at 58–68 (PYANGDIHIGH). Glu-563 contributes to the L-isoleucyl-5'-AMP binding site. Residues 605–609 (KMSKS) carry the 'KMSKS' region motif. An ATP-binding site is contributed by Lys-608. Zn(2+) is bound by residues Cys-892, Cys-895, Cys-912, and Cys-915.

Belongs to the class-I aminoacyl-tRNA synthetase family. IleS type 1 subfamily. In terms of assembly, monomer. The cofactor is Zn(2+).

Its subcellular location is the cytoplasm. The catalysed reaction is tRNA(Ile) + L-isoleucine + ATP = L-isoleucyl-tRNA(Ile) + AMP + diphosphate. Its function is as follows. Catalyzes the attachment of isoleucine to tRNA(Ile). As IleRS can inadvertently accommodate and process structurally similar amino acids such as valine, to avoid such errors it has two additional distinct tRNA(Ile)-dependent editing activities. One activity is designated as 'pretransfer' editing and involves the hydrolysis of activated Val-AMP. The other activity is designated 'posttransfer' editing and involves deacylation of mischarged Val-tRNA(Ile). The polypeptide is Isoleucine--tRNA ligase (Neisseria gonorrhoeae (strain ATCC 700825 / FA 1090)).